Reading from the N-terminus, the 382-residue chain is G2/mitotic-specific cyclin-B2 (382 aa).

Polar residues predominate over residues methionine 1 to leucine 12. A disordered region spans residues methionine 1–isoleucine 78. Low complexity predominate over residues asparagine 38 to arginine 47.

Belongs to the cyclin family. Cyclin AB subfamily. Interacts with the CDK1 protein kinase to form a serine/threonine kinase holoenzyme complex also known as maturation promoting factor (MPF). The cyclin subunit imparts substrate specificity to the complex.

Its function is as follows. Essential for the control of the cell cycle at the G2/M (mitosis) transition. This chain is G2/mitotic-specific cyclin-B2 (ccnb2), found in Oryzias javanicus (Javanese ricefish).